A 140-amino-acid chain; its full sequence is Acyl-coenzyme A thioesterase PaaI (140 aa).

In terms of assembly, homotetramer.

It functions in the pathway aromatic compound metabolism; phenylacetate degradation. Functionally, thioesterase with a preference for ring-hydroxylated phenylacetyl-CoA esters. Hydrolyzes 3,4-dihydroxyphenylacetyl-CoA, 3-hydroxyphenylacetyl-CoA and 4-hydroxyphenylacetyl-CoA. Inactive towards 4-hydroxybenzoyl-CoA and 4-hydroxyphenacyl-CoA. The chain is Acyl-coenzyme A thioesterase PaaI (paaI) from Escherichia coli (strain K12).